Here is a 350-residue protein sequence, read N- to C-terminus: MATTAAPAGGARNGAGPEWGGFEENIQGGGSAVIDMENMDDTSGSSFEDMGELHQRLREEEVDADAADAAAAEEEDGEFLGMKGFKGQLSRQVADQMWQAGKRQASRAFSLYANIDILRPYFDVEPAQVRSRLLESMIPIKMVNFPQKIAGELYGPLMLVFTLVAILLHGMKTSDTIIREGTLMGTAIGTCFGYWLGVSSFIYFLAYLCNAQITMLQMLALLGYGLFGHCIVLFITYNIHLHALFYLFWLLVGGLSTLRMVAVLVSRTVGPTQRLLLCGTLAALHMLFLLYLHFAYHKVVEGILDTLEGPNIPPIQRVPRDIPAMLPAARLPTTVLNATAKAVAVTLQSH.

The span at 1–10 (MATTAAPAGG) shows a compositional bias: low complexity. The interval 1–51 (MATTAAPAGGARNGAGPEWGGFEENIQGGGSAVIDMENMDDTSGSSFEDMG) is disordered. Alanine 2 is modified (N-acetylalanine). The Cytoplasmic segment spans residues 2–148 (ATTAAPAGGA…PIKMVNFPQK (147 aa)). A helical transmembrane segment spans residues 149–169 (IAGELYGPLMLVFTLVAILLH). Residues 170 to 187 (GMKTSDTIIREGTLMGTA) are Lumenal-facing. Residues 188–208 (IGTCFGYWLGVSSFIYFLAYL) form a helical membrane-spanning segment. At 209 to 214 (CNAQIT) the chain is on the cytoplasmic side. A helical transmembrane segment spans residues 215–237 (MLQMLALLGYGLFGHCIVLFITY). The Lumenal portion of the chain corresponds to 238-240 (NIH). A helical transmembrane segment spans residues 241–263 (LHALFYLFWLLVGGLSTLRMVAV). At 264 to 274 (LVSRTVGPTQR) the chain is on the cytoplasmic side. The chain crosses the membrane as a helical span at residues 275-295 (LLLCGTLAALHMLFLLYLHFA). The Lumenal portion of the chain corresponds to 296–350 (YHKVVEGILDTLEGPNIPPIQRVPRDIPAMLPAARLPTTVLNATAKAVAVTLQSH). Threonine 333 and threonine 334 each carry an O-linked (GalNAc...) threonine glycan. N-linked (GlcNAc...) asparagine glycosylation is present at asparagine 337. Threonine 339 and threonine 346 each carry an O-linked (GalNAc...) threonine glycan.

It belongs to the YIP1 family. Interacts with YIPF4 and YIPF5. In terms of processing, N-glycosylated in the ER (40 kDa form I), then O-glycosylated in the Golgi apparatus (46 kDa form II), the C-terminal lumenal region is later removed in the Golgi apparatus to produce a 36 kDa form III. O-glycosylated with core 1-like and core 2-like glycans. O-glycan heterogeneity at Thr-346: HexNAc (minor), HexHexNAc (major), Hex1HexNAc2 (minor), Hex2HexNAc2 (minor) and dHex1Hex2HexNAc2 (minor). In terms of tissue distribution, expressed by nucleated hematopoietic cells (at protein level).

The protein localises to the cell membrane. The protein resides in the cytoplasm. It is found in the golgi apparatus. Its subcellular location is the cis-Golgi network membrane. Its function is as follows. Involved in the maintenance of the Golgi structure. May play a role in hematopoiesis. This chain is Protein YIPF3 (YIPF3), found in Homo sapiens (Human).